Consider the following 190-residue polypeptide: Dual specificity protein phosphatase 21 (190 aa).

The Tyrosine-protein phosphatase domain occupies 21-162; sequence SFSQITRSLF…LINYEFKLFN (142 aa). Residues 43 to 128 are sufficient for mitochondrial localization; sequence LSSNRITAIV…AYLMKYHSMS (86 aa). The Phosphocysteine intermediate role is filled by cysteine 106.

Belongs to the protein-tyrosine phosphatase family. Non-receptor class dual specificity subfamily. In terms of assembly, microtubule inner protein component of sperm flagellar doublet microtubules. In terms of tissue distribution, expressed in testis.

It localises to the cytoplasm. The protein resides in the nucleus. Its subcellular location is the mitochondrion inner membrane. It is found in the cytoskeleton. The protein localises to the flagellum axoneme. The catalysed reaction is O-phospho-L-tyrosyl-[protein] + H2O = L-tyrosyl-[protein] + phosphate. It carries out the reaction O-phospho-L-seryl-[protein] + H2O = L-seryl-[protein] + phosphate. It catalyses the reaction O-phospho-L-threonyl-[protein] + H2O = L-threonyl-[protein] + phosphate. In terms of biological role, protein phosphatase component of the sperm flagellar doublet microtubules. May act as a regulator of sperm motility by mediating dephosphorylation of sperm doublet microtubule proteins. Can dephosphorylate single and diphosphorylated synthetic MAPK peptides, with preference for the phosphotyrosine and diphosphorylated forms over phosphothreonine. This Homo sapiens (Human) protein is Dual specificity protein phosphatase 21 (DUSP21).